The sequence spans 67 residues: Bombesin (67 aa).

Residues 1–30 (MLLLSAVKTLLLAWLGIVLVFMSIIKSAML) form the signal peptide. Residues 31-49 (DFLQEAGKLEGIETYKKEA) constitute a propeptide that is removed on maturation. Q50 carries the post-translational modification Pyrrolidone carboxylic acid. Methionine amide is present on M64.

In terms of tissue distribution, expressed by the skin glands.

It localises to the secreted. In terms of biological role, stimulates smooth muscle contraction in isolated rat stomach strip. This is Bombesin from Rana shuchinae (Sichuan frog).